The chain runs to 92 residues: PqqA binding protein (92 aa).

This sequence belongs to the PqqD family. Monomer. Interacts with PqqE.

It functions in the pathway cofactor biosynthesis; pyrroloquinoline quinone biosynthesis. Functionally, functions as a PqqA binding protein and presents PqqA to PqqE, in the pyrroloquinoline quinone (PQQ) biosynthetic pathway. In Xanthomonas euvesicatoria pv. vesicatoria (strain 85-10) (Xanthomonas campestris pv. vesicatoria), this protein is PqqA binding protein.